The primary structure comprises 266 residues: Undecaprenyl-diphosphatase 3 (266 aa).

Transmembrane regions (helical) follow at residues 4-24 (IEAFKALFLGFIEGLTEFLPI), 43-63 (SGRAFEVVIQLGAILAVCWLY), 86-106 (FSVLMAFFPAVIIGVLAVDFI), 109-129 (VLFSPLVVAIALIIGGLIIFW), 145-165 (ITFKQAIAVGFIQCLAMIPGT), 186-206 (TEFSFFLAMPTMLGAATYDLL), 219-239 (NIGLGFITAFISALFVVKALV), and 246-266 (TLRVFAWYRIVLGIIIMFVML).

Belongs to the UppP family.

It localises to the cell inner membrane. It catalyses the reaction di-trans,octa-cis-undecaprenyl diphosphate + H2O = di-trans,octa-cis-undecaprenyl phosphate + phosphate + H(+). Functionally, catalyzes the dephosphorylation of undecaprenyl diphosphate (UPP). Confers resistance to bacitracin. This Acinetobacter baylyi (strain ATCC 33305 / BD413 / ADP1) protein is Undecaprenyl-diphosphatase 3.